A 169-amino-acid chain; its full sequence is Sorting nexin-24 (169 aa).

Residue methionine 1 is modified to N-acetylmethionine. Residues 1–125 (MEVYIPSFRH…SFDETESEES (125 aa)) form the PX domain. A 1,2-diacyl-sn-glycero-3-phospho-(1D-myo-inositol-3-phosphate) contacts are provided by arginine 38, serine 40, lysine 61, and arginine 74. Serine 113 and serine 116 each carry phosphoserine.

It belongs to the sorting nexin family.

The protein localises to the cytoplasmic vesicle membrane. Functionally, may be involved in several stages of intracellular trafficking. In Rattus norvegicus (Rat), this protein is Sorting nexin-24 (Snx24).